The sequence spans 149 residues: Deoxyuridine 5'-triphosphate nucleotidohydrolase (149 aa).

Substrate contacts are provided by residues 68 to 70 (RSG), Asn81, and 85 to 87 (LID).

Belongs to the dUTPase family. Mg(2+) is required as a cofactor.

The catalysed reaction is dUTP + H2O = dUMP + diphosphate + H(+). The protein operates within pyrimidine metabolism; dUMP biosynthesis; dUMP from dCTP (dUTP route): step 2/2. This enzyme is involved in nucleotide metabolism: it produces dUMP, the immediate precursor of thymidine nucleotides and it decreases the intracellular concentration of dUTP so that uracil cannot be incorporated into DNA. In Nitrosospira multiformis (strain ATCC 25196 / NCIMB 11849 / C 71), this protein is Deoxyuridine 5'-triphosphate nucleotidohydrolase.